Reading from the N-terminus, the 416-residue chain is Probable histone-binding protein lin-53 (416 aa).

6 WD repeats span residues 118–158 (NHEG…SVPK), 170–210 (GHTK…GANG), 220–260 (GHES…PGHA), 263–303 (AHSA…LKLH), 307–347 (SHRD…EDQT), and 364–404 (GHTA…YNDV).

Belongs to the WD repeat RBAP46/RBAP48/MSI1 family. As to quaternary structure, binds directly to helix 1 of the histone fold of histone H4, a region that is not accessible when H4 is in chromatin. Probable component of a NuRD-like complex, composed of at least lin-53 and hda-1. Interacts with lin-35. Interacts with hda-1; the interaction is direct. Component of the DRM complex, at least composed of lin-9, lin-35, lin-37, lin-52, lin-53, lin-54- dpl-1 and efl-1. Interacts with hcp-3.

It localises to the nucleus. It is found in the chromosome. The protein localises to the centromere. Its function is as follows. Core histone-binding subunit that may target chromatin assembly factors, chromatin remodeling factors and histone deacetylases to their histone substrates in a manner that is regulated by nucleosomal DNA. Required for hcp-3 and his-1 stabilization, localization of hcp-3 to centromeres and for proper chromosome segregation. Synthetic multivulva class B (synMuvB) protein. SynMuvB proteins are required to repress the induction of vulval development by Ras signaling and probably act by forming the multiprotein DRM complex that represses transcription. The polypeptide is Probable histone-binding protein lin-53 (Caenorhabditis briggsae).